A 144-amino-acid chain; its full sequence is Ribonuclease VapC37 (144 aa).

The PINc domain maps to 3 to 137 (IVDANVLLYA…DFGRFEGVRW (135 aa)). Positions 5 and 90 each coordinate Mg(2+).

Belongs to the PINc/VapC protein family. Requires Mg(2+) as cofactor.

The protein resides in the secreted. Functionally, probable toxic component of a type II toxin-antitoxin (TA) system. An RNase. Upon expression in M.smegmatis inhibits colony formation. The putative cognate antitoxin is VapB37. The sequence is that of Ribonuclease VapC37 from Mycobacterium tuberculosis (strain ATCC 25618 / H37Rv).